The sequence spans 263 residues: uncharacterized protein (263 aa).

A disordered region spans residues 183–263 (APHDRPEGVP…PPSTNTKGAA (81 aa)). 2 stretches are compositionally biased toward polar residues: residues 230–239 (SRPTAPSRPS) and 253–263 (TPPSTNTKGAA).

In terms of biological role, probably does not play a direct role in plasmid integration or excision. This is an uncharacterized protein from Saccharopolyspora erythraea (Streptomyces erythraeus).